Reading from the N-terminus, the 455-residue chain is Probable glycine dehydrogenase (decarboxylating) subunit 1 (455 aa).

This sequence belongs to the GcvP family. N-terminal subunit subfamily. As to quaternary structure, the glycine cleavage system is composed of four proteins: P, T, L and H. In this organism, the P 'protein' is a heterodimer of two subunits.

The enzyme catalyses N(6)-[(R)-lipoyl]-L-lysyl-[glycine-cleavage complex H protein] + glycine + H(+) = N(6)-[(R)-S(8)-aminomethyldihydrolipoyl]-L-lysyl-[glycine-cleavage complex H protein] + CO2. In terms of biological role, the glycine cleavage system catalyzes the degradation of glycine. The P protein binds the alpha-amino group of glycine through its pyridoxal phosphate cofactor; CO(2) is released and the remaining methylamine moiety is then transferred to the lipoamide cofactor of the H protein. This chain is Probable glycine dehydrogenase (decarboxylating) subunit 1, found in Francisella philomiragia subsp. philomiragia (strain ATCC 25017 / CCUG 19701 / FSC 153 / O#319-036).